We begin with the raw amino-acid sequence, 2089 residues long: Non-reducing polyketide synthase PKS16 (2089 aa).

Residues 8-243 form an N-terminal acylcarrier protein transacylase (SAT) domain (SAT) region; it reads VLFGDQTVDP…IKLPITAAFH (236 aa). Residues 342–364 form a disordered region; that stretch reads AGIEVSRSTEMQPRQEQRTKPRS. Over residues 354–364 the composition is skewed to basic and acidic residues; that stretch reads PRQEQRTKPRS. Positions 364 to 793 constitute a Ketosynthase family 3 (KS3) domain; sequence SSDIAIIGYA…GGNTSLLIED (430 aa). Residues cysteine 536, histidine 671, and histidine 710 each act as for beta-ketoacyl synthase activity in the active site. Positions 891-1214 are malonyl-CoA:ACP transacylase (MAT) domain; sequence VFLFTGQGSQ…SIANAYNSGV (324 aa). Residues 1273 to 1586 are product template (PT) domain; sequence TTCLQVIENE…KRTTLQSLLG (314 aa). The interval 1276 to 1408 is N-terminal hotdog fold; sequence LQVIENETFT…CTVMYGDGHQ (133 aa). Residues 1276 to 1582 enclose the PKS/mFAS DH domain; the sequence is LQVIENETFT…FQQMKRTTLQ (307 aa). The Proton acceptor; for dehydratase activity role is filled by histidine 1309. The segment at 1435–1582 is C-terminal hotdog fold; sequence IHRMLKEMIY…FQQMKRTTLQ (148 aa). The Proton donor; for dehydratase activity role is filled by aspartate 1495. A Carrier 1 domain is found at 1617–1694; sequence QSPVAGFSKV…ELRAFFLDKM (78 aa). O-(pantetheine 4'-phosphoryl)serine is present on serine 1654. The interval 1697 to 1730 is disordered; sequence PQATANDDDSDDSSDDEGPGFSRSQSNSTISTPE. Residues 1702-1714 are compositionally biased toward acidic residues; sequence NDDDSDDSSDDEG. Residues 1718–1728 show a composition bias toward polar residues; the sequence is SRSQSNSTIST. The region spanning 1729–1806 is the Carrier 2 domain; sequence PEEPDVVNVL…DVQKALGAAP (78 aa). The residue at position 1766 (serine 1766) is an O-(pantetheine 4'-phosphoryl)serine. Positions 1848–2083 are thioesterase (TE) domain; it reads LFLLPDGAGS…VVGGNHFSIM (236 aa).

It functions in the pathway secondary metabolite biosynthesis. Non-reducing polyketide synthase; part of the gene cluster that mediates the biosynthesis of orcinol depsidone grayanic acid (GRA), the only major secondary metabolite known in C.grayi. The first step consists in the ring and depside synthesis by PKS16 leading to 4-O-demethylsphaerophorin, involving different orcinol-like rings, one with acetyl CoA and the other with octanoyl CoA as the starter. Further depsidone formation by the GRA cluster-specific cytochrome P450 leads to 4-O-demethylgrayanic acid. Finally, the cluster specific O-methyltransferase probably converts the 4-O-demethylgrayanic acid into grayanic acid. The protein is Non-reducing polyketide synthase PKS16 of Cladonia grayi (Gray's cup lichen).